Consider the following 2430-residue polypeptide: Transcription factor HIVEP2 (2430 aa).

A disordered region spans residues 1-127 (MDTGDTALGQ…SLEGPPWLFP (127 aa)). Composition is skewed to polar residues over residues 11 to 22 (KATSRSGETDSV) and 96 to 110 (HSLS…QGMT). 2 C2H2-type zinc fingers span residues 189–211 (YICP…IRSH) and 217–239 (YPCI…RKSH). Disordered regions lie at residues 271–302 (IHSD…PPVP), 374–418 (SEKK…NTNA), and 744–995 (AHGH…SGKH). The span at 381-418 (SEPSLNLLSPHSKGSTDSGYFSRSESAEQQISPPNTNA) shows a compositional bias: polar residues. Basic and acidic residues-rich tracts occupy residues 744-753 (AHGHSDRLDP) and 775-784 (DPDKMTDLGK). Residues 792 to 804 (SVIQHTNSLSRPN) show a composition bias toward polar residues. Residue Ser811 is modified to Phosphoserine. A compositionally biased stretch (polar residues) spans 853-863 (SKPTPSQQVPQ). The span at 884 to 908 (RVTEEPDKPEKEKEAPTKEPEKPVE) shows a compositional bias: basic and acidic residues. The Nuclear localization signal signature appears at 929–935 (PKKKRLR). A phosphoserine mark is found at Ser942, Ser947, Ser1040, Ser1431, and Ser1435. Over residues 944–974 (GESSFESTGTGLSRSPSQESNLSHSSSFSMS) the composition is skewed to low complexity. The segment at 1472–1584 (KKGLSRPQKP…GGQQEEEGKA (113 aa)) is disordered. 2 stretches are compositionally biased toward low complexity: residues 1499-1520 (SRSS…SASG) and 1560-1569 (SDMSMSPQSS). 2 C2H2-type zinc fingers span residues 1783–1805 (YICE…IRTH) and 1811–1835 (YVCK…SKAH). 2 disordered regions span residues 1848–1931 (SVDD…SSLP) and 1986–2117 (FQSK…SPRR). A compositionally biased stretch (acidic residues) spans 1850-1860 (DDTETEEAENM). Over residues 1861–1871 (EELHKTSEKHS) the composition is skewed to basic and acidic residues. The span at 1883 to 1909 (DAEESDGEDGDDNDDDDEDDDDFDDQG) shows a compositional bias: acidic residues. Residues 1991–2001 (TDSEPDKDRLD) are compositionally biased toward basic and acidic residues. The span at 2013 to 2037 (SSEPSSSPRDFSPSSYRSSPGYDSS) shows a compositional bias: low complexity. 10 tandem repeats follow at residues 2037-2040 (SPCR), 2043-2046 (SPKR), 2055-2058 (SPRR), 2067-2070 (SPMR), 2073-2076 (SPRK), 2090-2093 (SPRR), 2096-2099 (SPRR), 2102-2105 (SPGK), 2114-2117 (SPRR), and 2129-2132 (SPRR). A 10 X 4 AA tandem repeats of S-P-[RGMKC]-[RK] region spans residues 2037 to 2132 (SPCRDNSPKR…TTIRAPSPRR (96 aa)). Residues 2062-2085 (PRRDLSPMRHLSPRKEAALRREMS) are compositionally biased toward basic and acidic residues. Residue Ser2102 is modified to Phosphoserine. Residues 2107-2116 (ITARRDLSPR) are compositionally biased toward basic and acidic residues. 3 disordered regions span residues 2226 to 2252 (PALS…GAPG), 2268 to 2309 (KQAP…QEEN), and 2352 to 2430 (SIRH…NQLH). The span at 2271 to 2289 (PQVLQSSGLPSSPSSPRLL) shows a compositional bias: low complexity. Phosphoserine is present on residues Ser2281 and Ser2285. Residues 2291-2301 (KQSTSEDSLNS) show a composition bias toward polar residues. The segment covering 2371–2380 (PDLHDGEKDT) has biased composition (basic and acidic residues). Residues 2406-2417 (FQSSKELSLSTE) show a composition bias toward polar residues. Phosphoserine is present on residues Ser2413 and Ser2415.

Interacts with TCF4. As to expression, expressed in heart, lung, skeletal muscle and liver. In the brain expressed in cerebral cortex, hippocampus, corpora amygdala and cerebellar cortex.

Its subcellular location is the nucleus. Functionally, specifically binds to the DNA sequence 5'-GGGACTTTCC-3' which is found in the enhancer elements of numerous viral promoters such as those of SV40, CMV, or HIV1. In addition, related sequences are found in the enhancer elements of a number of cellular promoters, including those of the class I MHC, interleukin-2 receptor, somatostatin receptor II, and interferon-beta genes. It may act in T-cell activation. This Mus musculus (Mouse) protein is Transcription factor HIVEP2 (Hivep2).